The following is a 201-amino-acid chain: Small ribosomal subunit protein uS4c (201 aa).

Positions 89–157 constitute an S4 RNA-binding domain; the sequence is MRLDNILFRL…VQNYIASSDP (69 aa).

Belongs to the universal ribosomal protein uS4 family. As to quaternary structure, part of the 30S ribosomal subunit. Contacts protein S5. The interaction surface between S4 and S5 is involved in control of translational fidelity.

It localises to the plastid. The protein localises to the chloroplast. Its function is as follows. One of the primary rRNA binding proteins, it binds directly to 16S rRNA where it nucleates assembly of the body of the 30S subunit. With S5 and S12 plays an important role in translational accuracy. The sequence is that of Small ribosomal subunit protein uS4c (rps4) from Triticum aestivum (Wheat).